The primary structure comprises 366 residues: 3-isopropylmalate dehydrogenase (366 aa).

An NAD(+)-binding site is contributed by 76 to 89 (GPKWDANPSHLRPE). Substrate contacts are provided by Arg-96, Arg-106, Arg-134, and Asp-219. Residues Asp-219, Asp-243, and Asp-247 each contribute to the Mg(2+) site. 277-289 (GSAPDIAGKGIAN) is a binding site for NAD(+).

The protein belongs to the isocitrate and isopropylmalate dehydrogenases family. LeuB type 1 subfamily. In terms of assembly, homodimer. Mg(2+) is required as a cofactor. Mn(2+) serves as cofactor.

It is found in the cytoplasm. It catalyses the reaction (2R,3S)-3-isopropylmalate + NAD(+) = 4-methyl-2-oxopentanoate + CO2 + NADH. The protein operates within amino-acid biosynthesis; L-leucine biosynthesis; L-leucine from 3-methyl-2-oxobutanoate: step 3/4. Functionally, catalyzes the oxidation of 3-carboxy-2-hydroxy-4-methylpentanoate (3-isopropylmalate) to 3-carboxy-4-methyl-2-oxopentanoate. The product decarboxylates to 4-methyl-2 oxopentanoate. This is 3-isopropylmalate dehydrogenase from Oceanobacillus iheyensis (strain DSM 14371 / CIP 107618 / JCM 11309 / KCTC 3954 / HTE831).